The primary structure comprises 156 residues: Phosphopantetheine adenylyltransferase (156 aa).

T10 is a substrate binding site. Residues 10 to 11 and H18 each bind ATP; that span reads TF. Residues K42, L74, and R88 each coordinate substrate. Residues 89–91, E99, and 124–130 each bind ATP; these read GLR and NAFISSS.

Belongs to the bacterial CoaD family. In terms of assembly, homohexamer. It depends on Mg(2+) as a cofactor.

It localises to the cytoplasm. The enzyme catalyses (R)-4'-phosphopantetheine + ATP + H(+) = 3'-dephospho-CoA + diphosphate. It functions in the pathway cofactor biosynthesis; coenzyme A biosynthesis; CoA from (R)-pantothenate: step 4/5. Reversibly transfers an adenylyl group from ATP to 4'-phosphopantetheine, yielding dephospho-CoA (dPCoA) and pyrophosphate. This Campylobacter curvus (strain 525.92) protein is Phosphopantetheine adenylyltransferase.